The primary structure comprises 389 residues: Probable tRNA pseudouridine synthase D 1 (389 aa).

Aspartate 63 (nucleophile) is an active-site residue. One can recognise a TRUD domain in the interval glycine 135–isoleucine 345.

This sequence belongs to the pseudouridine synthase TruD family.

It carries out the reaction uridine(13) in tRNA = pseudouridine(13) in tRNA. Functionally, could be responsible for synthesis of pseudouridine from uracil-13 in transfer RNAs. The protein is Probable tRNA pseudouridine synthase D 1 (truD1) of Methanococcus maripaludis (strain DSM 14266 / JCM 13030 / NBRC 101832 / S2 / LL).